The sequence spans 225 residues: Phosphoserine phosphatase (225 aa).

M1 carries the N-acetylmethionine modification. Catalysis depends on D20, which acts as the Nucleophile. The Mg(2+) site is built by D20 and D22. 20–22 contacts L-serine; that stretch reads DVD. The Proton donor role is filled by D22. O-phospho-L-serine is bound at residue M52. G53 is a binding site for phosphate. L-serine is bound by residues 109–111 and K158; that span reads SGG. Residues 109–111 and K158 contribute to the O-phospho-L-serine site; that span reads SGG. D179 lines the Mg(2+) pocket. T182 contributes to the O-phospho-L-serine binding site. T182 provides a ligand contact to phosphate.

It belongs to the HAD-like hydrolase superfamily. SerB family. Homodimer. It depends on Mg(2+) as a cofactor.

The protein localises to the cytoplasm. It localises to the cytosol. It catalyses the reaction O-phospho-L-serine + H2O = L-serine + phosphate. The catalysed reaction is O-phospho-D-serine + H2O = D-serine + phosphate. Its pathway is amino-acid biosynthesis; L-serine biosynthesis; L-serine from 3-phospho-D-glycerate: step 3/3. Functionally, catalyzes the last irreversible step in the biosynthesis of L-serine from carbohydrates, the dephosphorylation of O-phospho-L-serine to L-serine. L-serine can then be used in protein synthesis, to produce other amino acids, in nucleotide metabolism or in glutathione synthesis, or can be racemized to D-serine, a neuromodulator. May also act on O-phospho-D-serine. The polypeptide is Phosphoserine phosphatase (Mus musculus (Mouse)).